Consider the following 126-residue polypeptide: TFVAIKPDGVQRGLCGEVMKFIQPMKQHYLDLKDMPFYAGLCKYMSSGPVFAMVWEGEGIVKMMLGETNPADSKPGSIRGDFCINIGRNIIHGSDTVENAKMEVALWFKPEEFVTYTEKAKAWVYE.

Positions 6, 37, 68, 79, and 89 each coordinate ATP. The Pros-phosphohistidine intermediate role is filled by His92.

This sequence belongs to the NDK family. Mg(2+) is required as a cofactor.

The protein resides in the cytoplasm. It localises to the nucleus. It is found in the cell projection. The protein localises to the lamellipodium. Its subcellular location is the ruffle. The catalysed reaction is a 2'-deoxyribonucleoside 5'-diphosphate + ATP = a 2'-deoxyribonucleoside 5'-triphosphate + ADP. It carries out the reaction a ribonucleoside 5'-diphosphate + ATP = a ribonucleoside 5'-triphosphate + ADP. Functionally, major role in the synthesis of nucleoside triphosphates other than ATP. In Merluccius capensis (Shallow-water Cape hake), this protein is Nucleoside diphosphate kinase B (nme2).